A 189-amino-acid polypeptide reads, in one-letter code: Nuclear distribution protein nudE homolog 1 (189 aa).

The stretch at 4 to 121 (NLDLETAIQI…LRVSKEEATS (118 aa)) forms a coiled coil. Basic and acidic residues predominate over residues 114–126 (VSKEEATSGETRR). Residues 114 to 139 (VSKEEATSGETRRNTRSLPSQNKKMK) form a disordered region.

Belongs to the nudE family. In terms of assembly, self-associates. Interacts with PAC1.

It is found in the nucleus. The protein resides in the cytoplasm. It localises to the cytoskeleton. Its function is as follows. Required for nuclear migration to the bud neck during cell division. Targets cytoplasmic dynein to microtubule plus ends thereby promoting dynein-mediated microtubule sliding along the bud cortex and consequently the movement of the mitotic spindle to the bud neck. This Saccharomyces cerevisiae (strain ATCC 204508 / S288c) (Baker's yeast) protein is Nuclear distribution protein nudE homolog 1 (NDL1).